Here is a 103-residue protein sequence, read N- to C-terminus: Small ribosomal subunit protein uS10 (103 aa).

This sequence belongs to the universal ribosomal protein uS10 family. In terms of assembly, part of the 30S ribosomal subunit.

Functionally, involved in the binding of tRNA to the ribosomes. This chain is Small ribosomal subunit protein uS10, found in Borrelia duttonii (strain Ly).